Here is a 318-residue protein sequence, read N- to C-terminus: L-lactate dehydrogenase (318 aa).

NAD(+) contacts are provided by residues valine 18, aspartate 39, lysine 44, tyrosine 69, and 83–84 (GA). Residues glutamine 86 and arginine 92 each contribute to the substrate site. Residues serine 105, 122 to 124 (VSN), and serine 147 each bind NAD(+). 124–127 (NPVD) is a substrate binding site. Residue 152–155 (DTSR) coordinates substrate. The Proton acceptor role is filled by histidine 179. At tyrosine 225 the chain carries Phosphotyrosine. Residue threonine 234 participates in substrate binding.

The protein belongs to the LDH/MDH superfamily. LDH family. Homotetramer.

The protein resides in the cytoplasm. The catalysed reaction is (S)-lactate + NAD(+) = pyruvate + NADH + H(+). Its pathway is fermentation; pyruvate fermentation to lactate; (S)-lactate from pyruvate: step 1/1. Functionally, catalyzes the conversion of lactate to pyruvate. The polypeptide is L-lactate dehydrogenase (Clostridium botulinum (strain Loch Maree / Type A3)).